Here is a 345-residue protein sequence, read N- to C-terminus: 4-hydroxy-3-methylbut-2-en-1-yl diphosphate synthase (flavodoxin) (345 aa).

C271, C274, C306, and E313 together coordinate [4Fe-4S] cluster.

The protein belongs to the IspG family. [4Fe-4S] cluster is required as a cofactor.

It carries out the reaction (2E)-4-hydroxy-3-methylbut-2-enyl diphosphate + oxidized [flavodoxin] + H2O + 2 H(+) = 2-C-methyl-D-erythritol 2,4-cyclic diphosphate + reduced [flavodoxin]. Its pathway is isoprenoid biosynthesis; isopentenyl diphosphate biosynthesis via DXP pathway; isopentenyl diphosphate from 1-deoxy-D-xylulose 5-phosphate: step 5/6. Its function is as follows. Converts 2C-methyl-D-erythritol 2,4-cyclodiphosphate (ME-2,4cPP) into 1-hydroxy-2-methyl-2-(E)-butenyl 4-diphosphate. This chain is 4-hydroxy-3-methylbut-2-en-1-yl diphosphate synthase (flavodoxin), found in Haemophilus influenzae (strain PittEE).